The following is a 167-amino-acid chain: MPTRSLPTFLTLLLLASIDWVSKLVVLLKSCQLSPHSSAFLYSYVWGHFSFLIIPSFNEGAAFGLFAQYKIPLLIFRVCVILGLALFLRIKYKSLHRRTRIALTLILAGALGNVGDILLHGKVVDFLFLSYYSWRFPSFNLADAFISIGTLLLIGHLYFNKESKKCF.

4 helical membrane passes run 8 to 28 (TFLT…VVLL), 46 to 66 (WGHF…FGLF), 68 to 88 (QYKI…ALFL), and 101 to 121 (IALT…LLHG). Residues D125 and D143 contribute to the active site. The helical transmembrane segment at 139-159 (FNLADAFISIGTLLLIGHLYF) threads the bilayer.

This sequence belongs to the peptidase A8 family.

Its subcellular location is the cell inner membrane. It carries out the reaction Release of signal peptides from bacterial membrane prolipoproteins. Hydrolyzes -Xaa-Yaa-Zaa-|-(S,diacylglyceryl)Cys-, in which Xaa is hydrophobic (preferably Leu), and Yaa (Ala or Ser) and Zaa (Gly or Ala) have small, neutral side chains.. The protein operates within protein modification; lipoprotein biosynthesis (signal peptide cleavage). This protein specifically catalyzes the removal of signal peptides from prolipoproteins. This Chlamydia trachomatis serovar L2b (strain UCH-1/proctitis) protein is Lipoprotein signal peptidase.